The following is a 310-amino-acid chain: tRNA dimethylallyltransferase (310 aa).

14 to 21 (GPTASGKS) lines the ATP pocket. 16-21 (TASGKS) contacts substrate. Interaction with substrate tRNA stretches follow at residues 39-42 (DSMQ) and 163-167 (QRIVR).

It belongs to the IPP transferase family. In terms of assembly, monomer. The cofactor is Mg(2+).

The enzyme catalyses adenosine(37) in tRNA + dimethylallyl diphosphate = N(6)-dimethylallyladenosine(37) in tRNA + diphosphate. Its function is as follows. Catalyzes the transfer of a dimethylallyl group onto the adenine at position 37 in tRNAs that read codons beginning with uridine, leading to the formation of N6-(dimethylallyl)adenosine (i(6)A). This is tRNA dimethylallyltransferase from Brucella ovis (strain ATCC 25840 / 63/290 / NCTC 10512).